Consider the following 53-residue polypeptide: Sodium/potassium-transporting ATPase subunit gamma (53 aa).

The helical transmembrane segment at glycine 16–serine 34 threads the bilayer.

It belongs to the FXYD family. As to quaternary structure, regulatory subunit of the sodium/potassium-transporting ATPase which is composed of a catalytic alpha subunit, an auxiliary non-catalytic beta subunit and an additional regulatory subunit. Post-translationally, the N-terminus is blocked. In terms of tissue distribution, highest levels expressed in the kidney and spleen. Restricted to the basolateral membrane in renal epithelial cells and varies in its level of expression along the nephron.

Its subcellular location is the membrane. Functionally, may be involved in forming the receptor site for cardiac glycoside binding or may modulate the transport function of the sodium ATPase. The chain is Sodium/potassium-transporting ATPase subunit gamma (FXYD2) from Ovis aries (Sheep).